The sequence spans 323 residues: Protein translocase subunit SecF (323 aa).

6 helical membrane-spanning segments follow: residues 19–39 (GVIVSAILVLLALGLLFFKGF), 138–158 (ILSLILALIAIMVYVSFRYEW), 162–182 (LASVVALVHDVILVASSVIVF), 189–209 (EVIAALLTLIGYSINDTIIIF), 244–264 (LTVFFVVLILCVFGSKIIIGF), and 269–289 (LIGTIVGTYSSIFIAPKVALL).

The protein belongs to the SecD/SecF family. SecF subfamily. As to quaternary structure, forms a complex with SecD. Part of the essential Sec protein translocation apparatus which comprises SecA, SecYEG and auxiliary proteins SecDF-YajC and YidC.

The protein resides in the cell inner membrane. Functionally, part of the Sec protein translocase complex. Interacts with the SecYEG preprotein conducting channel. SecDF uses the proton motive force (PMF) to complete protein translocation after the ATP-dependent function of SecA. This Helicobacter pylori (strain J99 / ATCC 700824) (Campylobacter pylori J99) protein is Protein translocase subunit SecF.